Consider the following 392-residue polypeptide: Formate-dependent phosphoribosylglycinamide formyltransferase (392 aa).

Residues 22–23 and Glu82 contribute to the N(1)-(5-phospho-beta-D-ribosyl)glycinamide site; that span reads EL. ATP contacts are provided by residues Arg114, Lys155, 160–165, 195–198, and Glu203; these read SSGKGQ and EGVV. The ATP-grasp domain occupies 119–308; sequence RLAAEELGLP…EFALHVRAFL (190 aa). 2 residues coordinate Mg(2+): Glu267 and Glu279. Residues Asp286, Lys355, and 362–363 each bind N(1)-(5-phospho-beta-D-ribosyl)glycinamide; that span reads RR.

It belongs to the PurK/PurT family. Homodimer.

The enzyme catalyses N(1)-(5-phospho-beta-D-ribosyl)glycinamide + formate + ATP = N(2)-formyl-N(1)-(5-phospho-beta-D-ribosyl)glycinamide + ADP + phosphate + H(+). Its pathway is purine metabolism; IMP biosynthesis via de novo pathway; N(2)-formyl-N(1)-(5-phospho-D-ribosyl)glycinamide from N(1)-(5-phospho-D-ribosyl)glycinamide (formate route): step 1/1. Functionally, involved in the de novo purine biosynthesis. Catalyzes the transfer of formate to 5-phospho-ribosyl-glycinamide (GAR), producing 5-phospho-ribosyl-N-formylglycinamide (FGAR). Formate is provided by PurU via hydrolysis of 10-formyl-tetrahydrofolate. In Cronobacter sakazakii (strain ATCC BAA-894) (Enterobacter sakazakii), this protein is Formate-dependent phosphoribosylglycinamide formyltransferase.